A 571-amino-acid chain; its full sequence is Isocitrate dehydrogenase kinase/phosphatase (571 aa).

Residues 318–324 and Lys339 contribute to the ATP site; that span reads APGVRGM. Residue Asp374 is part of the active site.

Belongs to the AceK family.

The protein resides in the cytoplasm. It catalyses the reaction L-seryl-[isocitrate dehydrogenase] + ATP = O-phospho-L-seryl-[isocitrate dehydrogenase] + ADP + H(+). Its function is as follows. Bifunctional enzyme which can phosphorylate or dephosphorylate isocitrate dehydrogenase (IDH) on a specific serine residue. This is a regulatory mechanism which enables bacteria to bypass the Krebs cycle via the glyoxylate shunt in response to the source of carbon. When bacteria are grown on glucose, IDH is fully active and unphosphorylated, but when grown on acetate or ethanol, the activity of IDH declines drastically concomitant with its phosphorylation. The chain is Isocitrate dehydrogenase kinase/phosphatase from Pseudomonas entomophila (strain L48).